Reading from the N-terminus, the 782-residue chain is Beta-mannosyltransferase 9 (782 aa).

The Cytoplasmic segment spans residues methionine 1–serine 26. The helical transmembrane segment at isoleucine 27–valine 47 threads the bilayer. At tyrosine 48–asparagine 782 the chain is on the extracellular side. Residues lysine 66–glutamine 96 form a disordered region. The segment covering glutamine 76 to glutamine 96 has biased composition (basic and acidic residues). 3 N-linked (GlcNAc...) asparagine glycosylation sites follow: asparagine 445, asparagine 648, and asparagine 699.

Belongs to the BMT family.

The protein resides in the membrane. Its function is as follows. Beta-mannosyltransferase involved in cell wall biosynthesis through beta-1,2-mannosylation of cell wall phosphopeptidomannan. The polypeptide is Beta-mannosyltransferase 9 (BMT9) (Candida albicans (strain SC5314 / ATCC MYA-2876) (Yeast)).